We begin with the raw amino-acid sequence, 380 residues long: RNA-binding motif protein, Y chromosome, family 9 (380 aa).

The RRM domain occupies 8-86 (GKIFIGGLNI…KRIKVKQARR (79 aa)). Disordered regions lie at residues 82-226 (KQAR…STSR) and 279-358 (HEAP…YSAS). A compositionally biased stretch (polar residues) spans 166-178 (RSATSAQTRSNTG). Composition is skewed to basic and acidic residues over residues 180 to 190 (RGREPHRREIS) and 333 to 351 (IDRE…HSPK).

As to expression, testis-specific.

Its subcellular location is the nucleus. In terms of biological role, RNA-binding protein which may be involved in spermatogenesis. May be required for sperm development, possibly by participating in pre-mRNA splicing in the testis. The polypeptide is RNA-binding motif protein, Y chromosome, family 9 (Mus musculus (Mouse)).